The following is a 364-amino-acid chain: Peptide chain release factor 2 (364 aa).

Q251 is modified (N5-methylglutamine).

The protein belongs to the prokaryotic/mitochondrial release factor family. Methylated by PrmC. Methylation increases the termination efficiency of RF2.

It localises to the cytoplasm. Its function is as follows. Peptide chain release factor 2 directs the termination of translation in response to the peptide chain termination codons UGA and UAA. This is Peptide chain release factor 2 (prfB) from Buchnera aphidicola subsp. Schizaphis graminum (strain Sg).